Consider the following 225-residue polypeptide: Glutathione S-transferase zeta class (225 aa).

The GST N-terminal domain maps to 10-91 (PKLKLYSYFR…YLEEKYPEHP (82 aa)). Glutathione contacts are provided by residues 20–25 (SSCSFR), Gln49, Val63, 75–76 (DS), Gln115, and 119–121 (NLA). A GST C-terminal domain is found at 96–221 (DIHKKAINYQ…MPDKQPDSTS (126 aa)).

It belongs to the GST superfamily. Zeta family.

The protein resides in the cytoplasm. The catalysed reaction is RX + glutathione = an S-substituted glutathione + a halide anion + H(+). This chain is Glutathione S-transferase zeta class, found in Euphorbia esula (Leafy spurge).